The chain runs to 211 residues: Large ribosomal subunit protein bL25 (211 aa).

This sequence belongs to the bacterial ribosomal protein bL25 family. CTC subfamily. As to quaternary structure, part of the 50S ribosomal subunit; part of the 5S rRNA/L5/L18/L25 subcomplex. Contacts the 5S rRNA. Binds to the 5S rRNA independently of L5 and L18.

Functionally, this is one of the proteins that binds to the 5S RNA in the ribosome where it forms part of the central protuberance. This is Large ribosomal subunit protein bL25 from Anaplasma phagocytophilum (strain HZ).